A 426-amino-acid chain; its full sequence is Glucose-6-phosphate isomerase (426 aa).

Catalysis depends on Glu-282, which acts as the Proton donor. Residues His-303 and Lys-417 contribute to the active site.

It belongs to the GPI family.

It is found in the cytoplasm. It catalyses the reaction alpha-D-glucose 6-phosphate = beta-D-fructose 6-phosphate. It participates in carbohydrate biosynthesis; gluconeogenesis. Its pathway is carbohydrate degradation; glycolysis; D-glyceraldehyde 3-phosphate and glycerone phosphate from D-glucose: step 2/4. Functionally, catalyzes the reversible isomerization of glucose-6-phosphate to fructose-6-phosphate. The chain is Glucose-6-phosphate isomerase from Aster yellows witches'-broom phytoplasma (strain AYWB).